Here is a 198-residue protein sequence, read N- to C-terminus: MASSSTRKYETRKRDPNSKIAALLVIDMQNHFSSMAKPILNNVLTTIDICRRASVPVFFTRHNHKSPTDHGMLGEWCNGDVILDGTTDSEIIQEIQGQVTGPDEMVEKNTYSAFNKTRLQENLEKIGVKEVIVIGVMTNLCCETTAREAFIKGFRVFFSTDATATFNEELHEATLMNLAFGFAYLVDCDKLRRSLLGN.

This sequence belongs to the isochorismatase family.

It carries out the reaction nicotinamide + H2O = nicotinate + NH4(+). It participates in cofactor biosynthesis; nicotinate biosynthesis; nicotinate from nicotinamide: step 1/1. Functionally, catalyzes the deamidation of nicotinamide, an early step in the NAD(+) salvage pathway. Prevents the accumulation of intracellular nicotinamide, a known inhibitor of poly(ADP-ribose) polymerases (PARP enzymes). The polypeptide is Nicotinamidase 3 (Arabidopsis thaliana (Mouse-ear cress)).